A 335-amino-acid polypeptide reads, in one-letter code: Fructose-1,6-bisphosphatase class 1 (335 aa).

Residues Glu-94, Asp-113, Leu-115, and Asp-116 each contribute to the Mg(2+) site. Residues 116-119, Asn-208, and Lys-274 each bind substrate; that span reads DGSS. Glu-280 provides a ligand contact to Mg(2+).

It belongs to the FBPase class 1 family. In terms of assembly, homotetramer. It depends on Mg(2+) as a cofactor.

It is found in the cytoplasm. The catalysed reaction is beta-D-fructose 1,6-bisphosphate + H2O = beta-D-fructose 6-phosphate + phosphate. It functions in the pathway carbohydrate biosynthesis; gluconeogenesis. This Polynucleobacter asymbioticus (strain DSM 18221 / CIP 109841 / QLW-P1DMWA-1) (Polynucleobacter necessarius subsp. asymbioticus) protein is Fructose-1,6-bisphosphatase class 1.